A 172-amino-acid chain; its full sequence is Translation initiation factor IF-3 (172 aa).

This sequence belongs to the IF-3 family. Monomer.

The protein localises to the cytoplasm. IF-3 binds to the 30S ribosomal subunit and shifts the equilibrium between 70S ribosomes and their 50S and 30S subunits in favor of the free subunits, thus enhancing the availability of 30S subunits on which protein synthesis initiation begins. The sequence is that of Translation initiation factor IF-3 from Thermotoga maritima (strain ATCC 43589 / DSM 3109 / JCM 10099 / NBRC 100826 / MSB8).